Here is a 298-residue protein sequence, read N- to C-terminus: Inosose dehydratase (298 aa).

Belongs to the IolE/MocC family. It depends on glutathione as a cofactor. Co(2+) is required as a cofactor. The cofactor is Mn(2+).

It catalyses the reaction scyllo-inosose = 3D-3,5/4-trihydroxycyclohexane-1,2-dione + H2O. The protein operates within polyol metabolism; myo-inositol degradation into acetyl-CoA; acetyl-CoA from myo-inositol: step 2/7. Its function is as follows. Catalyzes the dehydration of inosose (2-keto-myo-inositol, 2KMI or 2,4,6/3,5-pentahydroxycyclohexanone) to 3D-(3,5/4)-trihydroxycyclohexane-1,2-dione (D-2,3-diketo-4-deoxy-epi-inositol). The chain is Inosose dehydratase from Lacticaseibacillus casei (Lactobacillus casei).